A 275-amino-acid polypeptide reads, in one-letter code: 4-diphosphocytidyl-2-C-methyl-D-erythritol kinase (275 aa).

K14 is a catalytic residue. ATP is bound at residue 98–108; it reads PMGAGLGGGSS. D140 is an active-site residue.

The protein belongs to the GHMP kinase family. IspE subfamily.

The enzyme catalyses 4-CDP-2-C-methyl-D-erythritol + ATP = 4-CDP-2-C-methyl-D-erythritol 2-phosphate + ADP + H(+). Its pathway is isoprenoid biosynthesis; isopentenyl diphosphate biosynthesis via DXP pathway; isopentenyl diphosphate from 1-deoxy-D-xylulose 5-phosphate: step 3/6. Catalyzes the phosphorylation of the position 2 hydroxy group of 4-diphosphocytidyl-2C-methyl-D-erythritol. The chain is 4-diphosphocytidyl-2-C-methyl-D-erythritol kinase from Francisella tularensis subsp. tularensis (strain WY96-3418).